The primary structure comprises 288 residues: MAPKKRSSRGTRTNTLRSRKLASFLKDFDREVQVRTKQIESDRQTLLKEVENLYNIEVLRLPKALQVMKWLDYFALGGNRQALEEAATADRDITEINNLTAEAIQTPLKSVKKRKVIEVDEAIKEEEEDEEEEGGGGGGRKSHKNLRSARVKRCPPSKKRTQSIQGRSRSKRLSHDFVTPAMSRLEPSLVKPTPGMTPRFDSRVFKTPGLRTPAAKEQVYNISINGSPLADSKEISLSVPIGGGASLRLLASDLQRVDIAQLNPEALGNIKKLSSRLAQICSSIRTGR.

The required for interaction with INCENP stretch occupies residues methionine 1 to valine 58. The tract at residues methionine 1–threonine 88 is required for centromere localization. Residues methionine 1 to alanine 149 form a required for interaction with SENP3 region. Positions glycine 10 to lysine 109 are required to form a minimal CPC core complex that localizes to the central spindle and midbody and properly executes the role of the CPC during cytokinesis. The interval lysine 20 to glycine 78 is required for interaction with INCENP and BIRC5. A Phosphothreonine; by TTK modification is found at threonine 88. Arginine 91 is modified (citrulline). Phosphothreonine; by TTK is present on threonine 94. Threonine 106 is modified (phosphothreonine). Serine 110 is modified (phosphoserine). Residues lysine 124–glycine 134 show a composition bias toward acidic residues. The disordered stretch occupies residues lysine 124–leucine 173. Residues arginine 140–threonine 161 show a composition bias toward basic residues. Lysine 144 is covalently cross-linked (Glycyl lysine isopeptide (Lys-Gly) (interchain with G-Cter in SUMO2)). The residue at position 174 (serine 174) is a Phosphoserine; by AURKB. Threonine 197 and threonine 212 each carry phosphothreonine. Phosphoserine occurs at positions 227, 232, 246, and 252.

This sequence belongs to the borealin family. May form homooligomers and homodimers. Component of the chromosomal passenger complex (CPC) composed of at least BIRC5/survivin, CDCA8/borealin, INCENP, AURKB or AURKC; in the complex forms a triple-helix bundle-based subcomplex with INCENP and BIRC5. Interacts with SENP3, UBE2I and RANBP2. Interacts (phosphorylated) with SGO1 and SGO2; the association is dependent on CDK1. Phosphorylated by TTK, essentially at Thr-88 and Thr-94. Phosphorylation (probably by CDK1) promotes targeting of the CPC to centromeric DNA. Post-translationally, sumoylated by UBE2I and RANBP2. Desumoylated by SENP3 through the removal of SUMO2 and SUMO3. In terms of processing, citrullinated by PADI4.

It localises to the nucleus. The protein localises to the nucleolus. The protein resides in the cytoplasm. Its subcellular location is the chromosome. It is found in the centromere. It localises to the cytoskeleton. The protein localises to the spindle. In terms of biological role, component of the chromosomal passenger complex (CPC), a complex that acts as a key regulator of mitosis. The CPC complex has essential functions at the centromere in ensuring correct chromosome alignment and segregation and is required for chromatin-induced microtubule stabilization and spindle assembly. In the complex, it may be required to direct the CPC to centromeric DNA. This is Borealin (Cdca8) from Rattus norvegicus (Rat).